The following is a 134-amino-acid chain: Small ribosomal subunit protein uS11 (134 aa).

2 disordered regions span residues 1–22 (MPPK…KNVA) and 114–134 (SIQD…RRRV). Residues 9-22 (AAKKVRRKEKKNVA) are compositionally biased toward basic residues.

The protein belongs to the universal ribosomal protein uS11 family. As to quaternary structure, part of the 30S ribosomal subunit. Interacts with proteins S7 and S18. Binds to IF-3.

Located on the platform of the 30S subunit, it bridges several disparate RNA helices of the 16S rRNA. Forms part of the Shine-Dalgarno cleft in the 70S ribosome. The sequence is that of Small ribosomal subunit protein uS11 from Streptomyces avermitilis (strain ATCC 31267 / DSM 46492 / JCM 5070 / NBRC 14893 / NCIMB 12804 / NRRL 8165 / MA-4680).